The chain runs to 408 residues: G2/mitotic-specific cyclin-B (408 aa).

It belongs to the cyclin family. Cyclin AB subfamily. As to quaternary structure, interacts with the CDC2 protein kinase to form a serine/threonine kinase holoenzyme complex also known as maturation promoting factor (MPF). The cyclin subunit imparts substrate specificity to the complex.

In terms of biological role, essential for the control of the cell cycle at the G2/M (mitosis) transition. The polypeptide is G2/mitotic-specific cyclin-B (Patella vulgata (Common limpet)).